Here is a 94-residue protein sequence, read N- to C-terminus: Small ribosomal subunit protein uS19 (94 aa).

The segment at 73–94 (EFAPTRTYRGHGKDAERTTRRR) is disordered. Residues 83–94 (HGKDAERTTRRR) are compositionally biased toward basic and acidic residues.

It belongs to the universal ribosomal protein uS19 family.

In terms of biological role, protein S19 forms a complex with S13 that binds strongly to the 16S ribosomal RNA. The protein is Small ribosomal subunit protein uS19 of Thermomicrobium roseum (strain ATCC 27502 / DSM 5159 / P-2).